The sequence spans 438 residues: EF-hand calcium-binding domain-containing protein 3 (438 aa).

2 consecutive EF-hand domains span residues 47–82 (SQMA…LGMN) and 83–118 (LTKH…KNLF). Aspartate 96, aspartate 98, aspartate 100, lysine 102, and aspartate 107 together coordinate Ca(2+). A Phosphotyrosine modification is found at tyrosine 279. Low complexity predominate over residues 405 to 415 (SSHNSRSSSSS). Residues 405 to 438 (SSHNSRSSSSSDTSECYTDSGRKRKRKGLKGFQQ) are disordered. Positions 426 to 438 (RKRKRKGLKGFQQ) are enriched in basic residues.

The chain is EF-hand calcium-binding domain-containing protein 3 (EFCAB3) from Homo sapiens (Human).